The chain runs to 314 residues: tRNA-cytidine(32) 2-sulfurtransferase (314 aa).

The short motif at serine 53–serine 58 is the PP-loop motif element. [4Fe-4S] cluster contacts are provided by cysteine 128, cysteine 131, and cysteine 219.

Belongs to the TtcA family. As to quaternary structure, homodimer. Requires Mg(2+) as cofactor. [4Fe-4S] cluster serves as cofactor.

It localises to the cytoplasm. It carries out the reaction cytidine(32) in tRNA + S-sulfanyl-L-cysteinyl-[cysteine desulfurase] + AH2 + ATP = 2-thiocytidine(32) in tRNA + L-cysteinyl-[cysteine desulfurase] + A + AMP + diphosphate + H(+). Its pathway is tRNA modification. Functionally, catalyzes the ATP-dependent 2-thiolation of cytidine in position 32 of tRNA, to form 2-thiocytidine (s(2)C32). The sulfur atoms are provided by the cysteine/cysteine desulfurase (IscS) system. The protein is tRNA-cytidine(32) 2-sulfurtransferase of Colwellia psychrerythraea (strain 34H / ATCC BAA-681) (Vibrio psychroerythus).